The sequence spans 72 residues: DNA-directed RNA polymerase subunit omega (72 aa).

The protein belongs to the RNA polymerase subunit omega family. In terms of assembly, the RNAP catalytic core consists of 2 alpha, 1 beta, 1 beta' and 1 omega subunit. When a sigma factor is associated with the core the holoenzyme is formed, which can initiate transcription.

The enzyme catalyses RNA(n) + a ribonucleoside 5'-triphosphate = RNA(n+1) + diphosphate. Its function is as follows. Promotes RNA polymerase assembly. Latches the N- and C-terminal regions of the beta' subunit thereby facilitating its interaction with the beta and alpha subunits. The protein is DNA-directed RNA polymerase subunit omega of Clostridium botulinum (strain Langeland / NCTC 10281 / Type F).